The following is a 402-amino-acid chain: Enoyl-[acyl-carrier-protein] reductase [NADH] (402 aa).

NAD(+)-binding positions include 48-53 (GASSGY), 74-75 (FE), 111-112 (DA), and 140-141 (LA). Tyr-226 is a substrate binding site. Residue Tyr-236 is the Proton donor of the active site. Residues Lys-245 and 274-276 (VVT) contribute to the NAD(+) site.

It belongs to the TER reductase family. Monomer.

The catalysed reaction is a 2,3-saturated acyl-[ACP] + NAD(+) = a (2E)-enoyl-[ACP] + NADH + H(+). It participates in lipid metabolism; fatty acid biosynthesis. Its function is as follows. Involved in the final reduction of the elongation cycle of fatty acid synthesis (FAS II). Catalyzes the reduction of a carbon-carbon double bond in an enoyl moiety that is covalently linked to an acyl carrier protein (ACP). The sequence is that of Enoyl-[acyl-carrier-protein] reductase [NADH] from Xanthomonas campestris pv. campestris (strain 8004).